We begin with the raw amino-acid sequence, 312 residues long: NAD(P)(+)--arginine ADP-ribosyltransferase 2 (312 aa).

The N-terminal stretch at 1 to 20 is a signal peptide; sequence MELLALRWVLLAGTLLSTSA. The propeptide occupies 21-31; that stretch reads ASSALQEGDLG. 2 disulfides stabilise this stretch: C51-C260 and C159-C208. The TR mART core domain occupies 71–256; sequence YAYAVGWRKA…IYLRSKGKMS (186 aa). NAD(+) contacts are provided by Y108, R164, and Q183. Residue R164 is part of the active site. Residue S186 is part of the active site. Residue S217 coordinates NAD(+). E224 is an active-site residue. Positions 267-312 are excised as a propeptide; that stretch reads GGQWGRGHQEVGLGLSPGLALPVLPCSNCSCWGSGHRAGDPIPAAV.

It belongs to the Arg-specific ADP-ribosyltransferase family.

The protein localises to the secreted. The protein resides in the extracellular space. It catalyses the reaction L-arginyl-[protein] + NAD(+) = N(omega)-(ADP-D-ribosyl)-L-arginyl-[protein] + nicotinamide + H(+). The protein is NAD(P)(+)--arginine ADP-ribosyltransferase 2 of Gallus gallus (Chicken).